A 75-amino-acid chain; its full sequence is Small ribosomal subunit protein bS18c (75 aa).

Over residues M1–L12 the composition is skewed to basic residues. Residues M1–I21 form a disordered region.

This sequence belongs to the bacterial ribosomal protein bS18 family. Part of the 30S ribosomal subunit.

The protein resides in the plastid. Its subcellular location is the chloroplast. In Cycas taitungensis (Prince sago), this protein is Small ribosomal subunit protein bS18c.